A 270-amino-acid chain; its full sequence is MKPKMKYSTNKISTAKWKNTASKALCFKLGKSQQKAKEACHVYFMKLRSGLMIKKEACYFRRETTKRPSLKTDRKHKRHLVLAACQQQSTVESFAFGISGVQKYTRALHDSSITGISPITEYLASLSTYNDQSVTFALEDESYEIYVEDLKKDEKKDKVLLSYYESQRPSSESGDGVDGKMLMVTLSPTKDFWLHANNKEHSVELHKCEKPLADQAFFVLHNRPSNCVSFECKTDPGVFIGVKDNHLALIEVDSSENLGTENILFKLSET.

The segment at 1–65 is homeodomain-like HTH domain; that stretch reads MKPKMKYSTN…EACYFRRETT (65 aa). Residues 1–94 constitute a propeptide that is removed on maturation; the sequence is MKPKMKYSTN…CQQQSTVESF (94 aa). An interaction with RELA region spans residues 64 to 111; it reads TTKRPSLKTDRKHKRHLVLAACQQQSTVESFAFGISGVQKYTRALHDS.

The protein belongs to the IL-1 family. Highly divergent. In terms of assembly, forms a 1:1:1 heterotrimeric complex with its primary high-affinity receptor IL1RL1 and the coreceptor IL1RAP. Interacts with cargo receptor TMED10; the interaction mediates the translocation from the cytoplasm into the ERGIC (endoplasmic reticulum-Golgi intermediate compartment) and thereby secretion. In terms of processing, the full-length protein can be released from cells and is able to signal via the IL1RL1/ST2 receptor. However, proteolytic processing by CELA1, CSTG/cathepsin G and ELANE/neutrophil elastase produces C-terminal peptides that are more active than the unprocessed full-length protein. May also be proteolytically processed by calpains. Proteolytic cleavage mediated by apoptotic caspases including CASP3 and CASP7 results in IL33 inactivation. In vitro proteolytic cleavage by CASP1 was reported but could not be confirmed in vivo suggesting that IL33 is probably not a direct substrate for that caspase.

It is found in the nucleus. The protein localises to the chromosome. Its subcellular location is the cytoplasm. It localises to the cytoplasmic vesicle. The protein resides in the secretory vesicle. It is found in the secreted. Its function is as follows. Cytokine that binds to and signals through the IL1RL1/ST2 receptor which in turn activates NF-kappa-B and MAPK signaling pathways in target cells. Involved in the maturation of Th2 cells inducing the secretion of T-helper type 2-associated cytokines. Also involved in activation of mast cells, basophils, eosinophils and natural killer cells. Acts as a chemoattractant for Th2 cells, and may function as an 'alarmin', that amplifies immune responses during tissue injury. Induces rapid UCP2-dependent mitochondrial rewiring that attenuates the generation of reactive oxygen species and preserves the integrity of Krebs cycle required for persistent production of itaconate and subsequent GATA3-dependent differentiation of inflammation-resolving alternatively activated macrophages. In quiescent endothelia the uncleaved form is constitutively and abundantly expressed, and acts as a chromatin-associated nuclear factor with transcriptional repressor properties, it may sequester nuclear NF-kappaB/RELA, lowering expression of its targets. This form is rapidely lost upon angiogenic or pro-inflammatory activation. The sequence is that of Interleukin-33 (IL33) from Pongo abelii (Sumatran orangutan).